The primary structure comprises 172 residues: C-phycocyanin subunit beta (172 aa).

At N72 the chain carries N4-methylasparagine. (2R,3E)-phycocyanobilin contacts are provided by C82 and C153.

The protein belongs to the phycobiliprotein family. In terms of assembly, heterodimer of an alpha and a beta subunit, which further assembles into trimers and the trimers into hexamers. In terms of processing, contains two covalently linked bilin chromophores. The chromophore on position 82 is added by the phycocyanobilin lyase CpcUS, while the chromophore on position 153 is added by the phycocyanobilin lyase CpcT.

The protein localises to the cellular thylakoid membrane. Functionally, light-harvesting photosynthetic bile pigment-protein from the phycobiliprotein complex (phycobilisome, PBS). Phycocyanin is the major phycobiliprotein in the PBS rod. The polypeptide is C-phycocyanin subunit beta (cpcB) (Picosynechococcus sp. (strain ATCC 27264 / PCC 7002 / PR-6) (Agmenellum quadruplicatum)).